Here is a 107-residue protein sequence, read N- to C-terminus: U-scoloptoxin(19)-Sm1a (107 aa).

Residues 1–20 (MRFLVSVAFLLTVSSLLVSG) form the signal peptide.

The protein belongs to the scoloptoxin-19 family. Post-translationally, contains 6 disulfide bonds. As to expression, expressed by the venom gland.

Its subcellular location is the secreted. The chain is U-scoloptoxin(19)-Sm1a from Scolopendra morsitans (Tanzanian blue ringleg centipede).